Here is a 264-residue protein sequence, read N- to C-terminus: Thymidylate synthase (264 aa).

Residue Arg-21 coordinates dUMP. His-51 contacts (6R)-5,10-methylene-5,6,7,8-tetrahydrofolate. 126–127 serves as a coordination point for dUMP; the sequence is RR. The active-site Nucleophile is the Cys-146. Residues 166-169, Asn-177, and 207-209 contribute to the dUMP site; these read RSVD and HLY. Asp-169 serves as a coordination point for (6R)-5,10-methylene-5,6,7,8-tetrahydrofolate. Residue Ala-263 coordinates (6R)-5,10-methylene-5,6,7,8-tetrahydrofolate.

This sequence belongs to the thymidylate synthase family. Bacterial-type ThyA subfamily. As to quaternary structure, homodimer.

The protein resides in the cytoplasm. The catalysed reaction is dUMP + (6R)-5,10-methylene-5,6,7,8-tetrahydrofolate = 7,8-dihydrofolate + dTMP. The protein operates within pyrimidine metabolism; dTTP biosynthesis. In terms of biological role, catalyzes the reductive methylation of 2'-deoxyuridine-5'-monophosphate (dUMP) to 2'-deoxythymidine-5'-monophosphate (dTMP) while utilizing 5,10-methylenetetrahydrofolate (mTHF) as the methyl donor and reductant in the reaction, yielding dihydrofolate (DHF) as a by-product. This enzymatic reaction provides an intracellular de novo source of dTMP, an essential precursor for DNA biosynthesis. This Geobacillus kaustophilus (strain HTA426) protein is Thymidylate synthase.